Consider the following 93-residue polypeptide: Putative membrane protein insertion efficiency factor (93 aa).

The segment at 72–93 (VPEHFPSWRGPHPKTPSRKTPE) is disordered. The segment covering 82 to 93 (PHPKTPSRKTPE) has biased composition (basic residues).

This sequence belongs to the UPF0161 family.

It localises to the cell membrane. Its function is as follows. Could be involved in insertion of integral membrane proteins into the membrane. This chain is Putative membrane protein insertion efficiency factor, found in Deinococcus geothermalis (strain DSM 11300 / CIP 105573 / AG-3a).